We begin with the raw amino-acid sequence, 525 residues long: GMP synthase [glutamine-hydrolyzing] (525 aa).

Residues 13-202 (TILVLDFGSQ…AVEICQAAQT (190 aa)) enclose the Glutamine amidotransferase type-1 domain. The Nucleophile role is filled by C89. Active-site residues include H176 and E178. Residues 203–400 (WTMENFIDTE…LGISHELVWR (198 aa)) enclose the GMPS ATP-PPase domain. An ATP-binding site is contributed by 231 to 237 (SGGVDST). 4 residues coordinate XMP: R304, D462, K517, and E523.

In terms of assembly, homodimer. Requires Mg(2+) as cofactor.

Its subcellular location is the cytoplasm. It localises to the cytosol. It carries out the reaction XMP + L-glutamine + ATP + H2O = GMP + L-glutamate + AMP + diphosphate + 2 H(+). It functions in the pathway purine metabolism; GMP biosynthesis; GMP from XMP (L-Gln route): step 1/1. Its function is as follows. Catalyzes the conversion of xanthine monophosphate (XMP) to GMP in the presence of glutamine and ATP through an adenyl-XMP intermediate. In Eremothecium gossypii (strain ATCC 10895 / CBS 109.51 / FGSC 9923 / NRRL Y-1056) (Yeast), this protein is GMP synthase [glutamine-hydrolyzing] (GUA1).